A 395-amino-acid polypeptide reads, in one-letter code: Thyroid hormone receptor beta (395 aa).

The modulating stretch occupies residues 1 to 31; sequence MSEQADKCNSRWKDEAMQNGYIPSYLDKDEL. Residues 29 to 106 constitute a DNA-binding region (nuclear receptor); sequence DELCVVCGDK…VGMATDLVLD (78 aa). Zn(2+) contacts are provided by Cys32, Cys35, Cys49, Cys52, Cys70, Cys76, Cys86, and Cys89. NR C4-type zinc fingers lie at residues 32–52 and 70–89; these read CVVC…CEGC and CKYE…CQEC. The 254-residue stretch at 142 to 395 folds into the NR LBD domain; the sequence is EEWEMIRVVT…PPLFLEVFED (254 aa). 3,3',5-triiodo-L-thyronine-binding residues include Arg216, Asn265, and His369.

It belongs to the nuclear hormone receptor family. NR1 subfamily. Interacts (via the ligand-binding domain) with ncoa2. As to expression, widely expressed in a range of adult tissues including the brain, eye, fin, gill, intestine, liver, swim bladder and ovary. In the eye, expressed in the outer nuclear layer of the retina.

Its subcellular location is the nucleus. Nuclear hormone receptor that can act as a repressor or activator of transcription. High affinity receptor for the thyroid gland hormone triiodothyronine (T3). Transactivating activity is ligand-dependent, and is repressed in the absence of T3. In Danio rerio (Zebrafish), this protein is Thyroid hormone receptor beta (thrb).